A 403-amino-acid chain; its full sequence is Imidazolonepropionase (403 aa).

Histidine 68 and histidine 70 together coordinate Fe(3+). The Zn(2+) site is built by histidine 68 and histidine 70. Positions 77, 140, and 173 each coordinate 4-imidazolone-5-propanoate. Tyrosine 140 contributes to the N-formimidoyl-L-glutamate binding site. Histidine 238 lines the Fe(3+) pocket. Histidine 238 serves as a coordination point for Zn(2+). Glutamine 241 is a 4-imidazolone-5-propanoate binding site. Aspartate 313 provides a ligand contact to Fe(3+). Aspartate 313 lines the Zn(2+) pocket. 2 residues coordinate N-formimidoyl-L-glutamate: asparagine 315 and glycine 317. Threonine 318 contributes to the 4-imidazolone-5-propanoate binding site.

It belongs to the metallo-dependent hydrolases superfamily. HutI family. Zn(2+) serves as cofactor. It depends on Fe(3+) as a cofactor.

It is found in the cytoplasm. The catalysed reaction is 4-imidazolone-5-propanoate + H2O = N-formimidoyl-L-glutamate. Its pathway is amino-acid degradation; L-histidine degradation into L-glutamate; N-formimidoyl-L-glutamate from L-histidine: step 3/3. Its function is as follows. Catalyzes the hydrolytic cleavage of the carbon-nitrogen bond in imidazolone-5-propanoate to yield N-formimidoyl-L-glutamate. It is the third step in the universal histidine degradation pathway. In Psychromonas ingrahamii (strain DSM 17664 / CCUG 51855 / 37), this protein is Imidazolonepropionase.